The chain runs to 1485 residues: MSIDADFSDYEDEASGDENVLPNTTTKRKASTTSSKSRAKKASTPDLRQTSLTSMTASEQIPLVTNNGNGNSNVSTQYQRLTPREHVLRRPDTYIGSIEPTTSEMWVFDSEKNKLDYKAVTYVPGLYKIFDEIIVNAADNKVRDPNMNTLKVTLDPEANVISIYNNGKGIPIEIHDKEKIYIPELIFGNLLTSSNYDDNQKKVTGGRNGYGAKLCNIFSTEFVVETADKERMKKYKQTWYDNMSRKSEPVITSLKKPDEYTKITFKPDLAKFGMDKIDDDMVSIIKRRIYDMAGTVRETKVYLNNERISISGFKKYVEMYLASDTKPDEEPPRVIYEHVNDRWDVAFAVSDGQFKQVSFVNNISTIRGGTHVNYVANKIVDAIDEVVKKENKKAPVKAFQIKNYVQVFVNCQIENPSFDSQTKETLTTKVSAFGSQCTLSDKFLKAIKKSSVVEEVLKFATAKADQQLSKGDGGLRSRITGLTKLEDANKAGTKESHKCVLILTEGDSAKSLAVSGLSVVGRDYYGVFPLRGKLLNVREASHSQILNNKEIQAIKKIMGFTHKKTYTDVKGLRYGHLMIMTDQDHDGSHIKGLIINYLESSYPSLLQIPGFLIQFITPIIKCTRGNQVQAFYTLPEYEYWKEANNNGRGWKIKYYKGLGTSDHDDMKSYFSDLDRHMKYFHAMQEKDAELIEMAFAKKKADVRKEWLRTYRPGIYMDYTQPQIPIDDFINRELIQFSMADNIRSIPSVVDGLKPGQRKVVYYCFKRNLVHETKVSRLAGYVASETAYHHGEVSMEQTIVNLAQNFVGSNNINLLMPNGQFGTRSEGGKNASASRYLNTALSPLARVLFNSNDDQLLNYQNDEGQWIEPEYYVPILPMVLVNGAEGIGTGWSTFIPNYNPKDITANLRHMLNGEPLEIMTPWYRGFRGSITKVAPDRYKISGIINQIGENKVEITELPIRFWTQDMKEYLEAGLVGTEKIRKFIVDYESHHGEGNVHFNVTLTEAGMKEALNESLEVKFKLSRTQATSNMIAFDASGRIKKYDSVEDILTEFYEVRLRTYQRRKEHMVNELEKRFDRFSNQARFIHMIIEGELVVSKKKKKDLIVELKEKKFQPISKPKKGHLVDLEVENALAEEEQSGDVSQDEDSDAYNYLLSMPLWSLTYERYVELLKKKDEVMAELDALIKKTPKELWLHDLDAFEHAWNKVMDDIQREMLEEEQSSRDFVNRTKKKPRGKSTGTRKPRAIAGSSSSTAVKKEASSESKPSTTNRKQQTLLEFAASKEPEKSSDINIVKTEDNSHGLSVEENRISKSPGLDSSDSGKSRKRSQSVDSEDAGSKKPVKKIAASASGRGRKTNKPVATTIFSSDDEDDLLPSSLKPSTITSTKASAKNKGKKASSVKKQSPEDDDDDFIIPGSSSTPKASSTNAEPPEDSDSPIRKRPTRRAAATVKTPIYVDPSFDSMDEPSMQDDSFIVDNDEDVDDYDESD.

Over residues 1–16 (MSIDADFSDYEDEASG) the composition is skewed to acidic residues. Positions 1-76 (MSIDADFSDY…NGNGNSNVST (76 aa)) are disordered. The segment covering 46-59 (DLRQTSLTSMTASE) has biased composition (polar residues). Positions 64–76 (VTNNGNGNSNVST) are enriched in low complexity. ATP contacts are provided by residues Asn-136, Asn-165, 193 to 195 (SSN), and 206 to 213 (GRNGYGAK). The interaction with DNA stretch occupies residues 388–392 (KKENK). An ATP-binding site is contributed by 421-423 (QTK). One can recognise a Toprim domain in the interval 499–613 (CVLILTEGDS…SLLQIPGFLI (115 aa)). Residues Glu-505, Asp-582, and Asp-584 each coordinate Mg(2+). Residues 745–1195 (IPSVVDGLKP…TPKELWLHDL (451 aa)) form the Topo IIA-type catalytic domain. The active-site O-(5'-phospho-DNA)-tyrosine intermediate is Tyr-835. The segment at 1019 to 1028 (KLSRTQATSN) is interaction with DNA. A compositionally biased stretch (basic and acidic residues) spans 1216-1225 (EEQSSRDFVN). Positions 1216 to 1485 (EEQSSRDFVN…EDVDDYDESD (270 aa)) are disordered. Residues 1226 to 1242 (RTKKKPRGKSTGTRKPR) are compositionally biased toward basic residues. A compositionally biased stretch (polar residues) spans 1260–1273 (ESKPSTTNRKQQTL). Over residues 1278-1307 (ASKEPEKSSDINIVKTEDNSHGLSVEENRI) the composition is skewed to basic and acidic residues. Residues Ser-1310 and Ser-1345 each carry the phosphoserine modification. The segment covering 1387–1396 (AKNKGKKASS) has biased composition (basic residues). Polar residues predominate over residues 1413–1425 (GSSSTPKASSTNA). A Phosphoserine modification is found at Ser-1433. Residues 1473–1485 (DNDEDVDDYDESD) are compositionally biased toward acidic residues.

Belongs to the type II topoisomerase family. As to quaternary structure, homodimer. Requires Mg(2+) as cofactor. Mn(2+) serves as cofactor. The cofactor is Ca(2+). Phosphorylated at multiple sites at both extremities of the protein.

The protein resides in the nucleus. It catalyses the reaction ATP-dependent breakage, passage and rejoining of double-stranded DNA.. Control of topological states of DNA by transient breakage and subsequent rejoining of DNA strands. Topoisomerase II makes double-strand breaks. This chain is DNA topoisomerase 2 (top2), found in Schizosaccharomyces pombe (strain 972 / ATCC 24843) (Fission yeast).